The primary structure comprises 517 residues: Beta-galactoside alpha-2,6-sialyltransferase 2 (517 aa).

Residues 1 to 10 lie on the Cytoplasmic side of the membrane; that stretch reads MKPNLKQWKQ. Residues 11-31 traverse the membrane as a helical; Signal-anchor for type II membrane protein segment; the sequence is FMLFGICAWGLLFLVIFVYFT. The Lumenal segment spans residues 32-517; sequence DSNSVEPVPS…IHCPIKDHIT (486 aa). N-linked (GlcNAc...) asparagine glycans are attached at residues Asn-201, Asn-298, and Asn-328. Disulfide bonds link Cys-244/Cys-510, Cys-287/Cys-439, and Cys-457/Cys-468.

Belongs to the glycosyltransferase 29 family.

Its subcellular location is the golgi apparatus. The protein localises to the golgi stack membrane. It carries out the reaction a beta-D-galactoside + CMP-N-acetyl-beta-neuraminate = an N-acetyl-alpha-neuraminyl-(2-&gt;6)-beta-D-galactosyl derivative + CMP + H(+). Its function is as follows. Transfers sialic acid from the donor of substrate CMP-sialic acid to galactose containing acceptor substrates. This chain is Beta-galactoside alpha-2,6-sialyltransferase 2 (st6gal2), found in Xenopus tropicalis (Western clawed frog).